Here is a 312-residue protein sequence, read N- to C-terminus: Malate dehydrogenase (312 aa).

NAD(+)-binding positions include 7-13 and aspartate 34; that span reads GAAGGIG. Substrate is bound by residues arginine 81 and arginine 87. NAD(+) is bound by residues asparagine 94 and 117 to 119; that span reads ITN. Residues asparagine 119 and arginine 153 each coordinate substrate. Histidine 177 serves as the catalytic Proton acceptor. Position 227 (methionine 227) interacts with NAD(+).

The protein belongs to the LDH/MDH superfamily. MDH type 1 family. As to quaternary structure, homodimer.

The enzyme catalyses (S)-malate + NAD(+) = oxaloacetate + NADH + H(+). In terms of biological role, catalyzes the reversible oxidation of malate to oxaloacetate. In Moritella marina (Vibrio marinus), this protein is Malate dehydrogenase.